A 264-amino-acid chain; its full sequence is Glutamate racemase (264 aa).

Substrate contacts are provided by residues 12-13 (DS) and 44-45 (YG). The active-site Proton donor/acceptor is the Cys-75. 76–77 (NT) serves as a coordination point for substrate. Residue Cys-186 is the Proton donor/acceptor of the active site. 187–188 (TH) lines the substrate pocket.

Belongs to the aspartate/glutamate racemases family.

The enzyme catalyses L-glutamate = D-glutamate. It functions in the pathway cell wall biogenesis; peptidoglycan biosynthesis. Its function is as follows. Provides the (R)-glutamate required for cell wall biosynthesis. The sequence is that of Glutamate racemase from Stutzerimonas stutzeri (strain A1501) (Pseudomonas stutzeri).